Reading from the N-terminus, the 894-residue chain is Exocyst complex component 1 (894 aa).

Coiled coils occupy residues 152–199 (GDEE…LQVL) and 205–259 (QSIM…NHLI). The disordered stretch occupies residues 437–495 (SKESKKFATLPRKESAVKQETESLHGSSGKLTGSTSSLNKLSVQSSGSRRSQSSSLLDM). Basic and acidic residues predominate over residues 438-459 (KESKKFATLPRKESAVKQETES). Positions 460-491 (LHGSSGKLTGSTSSLNKLSVQSSGSRRSQSSS) are enriched in low complexity. The residue at position 470 (serine 470) is a Phosphoserine. Position 471 is a phosphothreonine (threonine 471). Phosphoserine occurs at positions 473, 487, and 501.

It belongs to the SEC3 family. In terms of assembly, the exocyst complex is composed of EXOC1, EXOC2, EXOC3, EXOC4, EXOC5, EXOC6, EXOC7 and EXOC8. Interacts with EEF1A1. Interacts with SLC6A9; interaction increases the transporter capacity of SLC6A9 probably by promoting its insertion into the cell membrane.

The protein localises to the midbody. It localises to the midbody ring. Its subcellular location is the cytoplasm. It is found in the perinuclear region. The protein resides in the cell membrane. Its function is as follows. Component of the exocyst complex involved in the docking of exocytic vesicles with fusion sites on the plasma membrane. The polypeptide is Exocyst complex component 1 (Exoc1) (Mus musculus (Mouse)).